The following is a 270-amino-acid chain: Triosephosphate isomerase (270 aa).

Substrate is bound at residue 27-29; the sequence is NWK. H114 functions as the Electrophile in the catalytic mechanism. The active-site Proton acceptor is E184. Substrate contacts are provided by residues G190, S230, and 251–252; that span reads GG.

The protein belongs to the triosephosphate isomerase family. In terms of assembly, homodimer.

It is found in the cytoplasm. It catalyses the reaction D-glyceraldehyde 3-phosphate = dihydroxyacetone phosphate. Its pathway is carbohydrate biosynthesis; gluconeogenesis. It functions in the pathway carbohydrate degradation; glycolysis; D-glyceraldehyde 3-phosphate from glycerone phosphate: step 1/1. Its function is as follows. Involved in the gluconeogenesis. Catalyzes stereospecifically the conversion of dihydroxyacetone phosphate (DHAP) to D-glyceraldehyde-3-phosphate (G3P). The polypeptide is Triosephosphate isomerase (Chlamydia muridarum (strain MoPn / Nigg)).